The primary structure comprises 122 residues: Large ribosomal subunit protein uL14 (122 aa).

This sequence belongs to the universal ribosomal protein uL14 family. Part of the 50S ribosomal subunit. Forms a cluster with proteins L3 and L19. In the 70S ribosome, L14 and L19 interact and together make contacts with the 16S rRNA in bridges B5 and B8.

In terms of biological role, binds to 23S rRNA. Forms part of two intersubunit bridges in the 70S ribosome. In Lactobacillus acidophilus (strain ATCC 700396 / NCK56 / N2 / NCFM), this protein is Large ribosomal subunit protein uL14.